Consider the following 342-residue polypeptide: MQVYSLQELAQQIGATIRGNADVVVESIAPLDKATEKQLTFISNPKFRSLLAQSHAGILVVSEADVAFCAEQSNLLIVKDPYVAYAVLAQYMDSTPKAASGIAASAVVSASAVIGKNVSIGANAVIEDGVTLGDHVVIGANCFVGKNSKIGAYTQLWANVSVYHEVEIGQHCLIQSGAVIGSDGFGYANDRGRWIKIPQVGQVIIGNHVEIGACTCIDRGALDPTVIEDNVIIDNLCQIAHNVHIGTGTAVAGGVIMAGSLTVGRYCLIGGASVINGHMEICDKVTITGMGMVMRPITEPGVYSSGIPLQTNKEWRKTAALTLGIDAMNKRLKALEKKFEKK.

His241 (proton acceptor) is an active-site residue.

It belongs to the transferase hexapeptide repeat family. LpxD subfamily. In terms of assembly, homotrimer.

It catalyses the reaction a UDP-3-O-[(3R)-3-hydroxyacyl]-alpha-D-glucosamine + a (3R)-hydroxyacyl-[ACP] = a UDP-2-N,3-O-bis[(3R)-3-hydroxyacyl]-alpha-D-glucosamine + holo-[ACP] + H(+). Its pathway is bacterial outer membrane biogenesis; LPS lipid A biosynthesis. Its function is as follows. Catalyzes the N-acylation of UDP-3-O-acylglucosamine using 3-hydroxyacyl-ACP as the acyl donor. Is involved in the biosynthesis of lipid A, a phosphorylated glycolipid that anchors the lipopolysaccharide to the outer membrane of the cell. The sequence is that of UDP-3-O-acylglucosamine N-acyltransferase from Pasteurella multocida (strain Pm70).